A 298-amino-acid chain; its full sequence is S-adenosylmethionine-dependent nucleotide dehydratase (298 aa).

Positions 8–235 constitute a Radical SAM core domain; the sequence is ANKELVVNWH…QRFGEIIYAE (228 aa). [4Fe-4S] cluster-binding residues include cysteine 22, cysteine 26, and cysteine 29.

It belongs to the radical SAM superfamily. Viperin family. [4Fe-4S] cluster is required as a cofactor.

The enzyme catalyses CTP + AH2 + S-adenosyl-L-methionine = 3'-deoxy-3',4'-didehydro-CTP + 5'-deoxyadenosine + L-methionine + A + H2O + H(+). It catalyses the reaction UTP + AH2 + S-adenosyl-L-methionine = 3'-deoxy-3',4'-didehydro-UTP + 5'-deoxyadenosine + L-methionine + A + H2O + H(+). Functionally, expression of pVip8 in E.coli (strain MG1655) confers resistance to phages lambda, P1, SECphi8 and T7. Prevents culture collapse upon infection with T7. Catalyzes the conversion of cytidine triphosphate (CTP) to 3'-deoxy-3',4'-didehydro-CTP (ddhCTP) and uridine triphosphate (UTP) to 3'-deoxy-3',4'-didehydro-UTP (ddhUTP), probably via a SAM-dependent radical mechanism. The modified nucleotides repress transcription from T7 RNA polymerase-directed genes (possibly by acting as chain terminators), strongly suggesting these nucleotides block viral polymerase transcription. The chain is S-adenosylmethionine-dependent nucleotide dehydratase from Psychrobacter lutiphocae (strain DSM 21542 / CCUG 56590 / IMMIB L-1110).